The primary structure comprises 24 residues: U1-plectoxin-Pt1e (24 aa).

An intrachain disulfide couples Cys4 to Cys18.

This sequence belongs to the neurotoxin 02 (plectoxin) family. 02 (plectoxin) subfamily. Contains 5 disulfide bonds. As to expression, expressed by the venom gland.

It localises to the secreted. Potent toxin that may paralyze and/or kill insect pests such as H.virescens (lepidoptera), S.exigua (beet armyworm) and M.sexta (tobacco hornworm). The sequence is that of U1-plectoxin-Pt1e from Plectreurys tristis (Spider).